Here is a 127-residue protein sequence, read N- to C-terminus: Large ribosomal subunit protein bL12 (127 aa).

The protein belongs to the bacterial ribosomal protein bL12 family. Homodimer. Part of the ribosomal stalk of the 50S ribosomal subunit. Forms a multimeric L10(L12)X complex, where L10 forms an elongated spine to which 2 to 4 L12 dimers bind in a sequential fashion. Binds GTP-bound translation factors.

Forms part of the ribosomal stalk which helps the ribosome interact with GTP-bound translation factors. Is thus essential for accurate translation. This is Large ribosomal subunit protein bL12 from Thiobacillus denitrificans (strain ATCC 25259 / T1).